The chain runs to 494 residues: MTDIIRSDAATLAAKIAIKEVSSTEITRACLDQIEATDETYHAFLHVAADEALAAAAAVDKQVAAGEPLPSALAGVPLALKDVFTTSDMPTTCGSKILEGWRSPYDATLTARLRAAGIPILGKTNMDEFAMGSSTENSAYGPTRNPWNLDRVPGGSGGGSAAALAAFQAPLAIGSDTGGSIRQPAALTATVGVKPTYGTVSRYGLVACASSLDQGGPCARTVLDTALLHQVIAGHDPRDSTSVDAEVPDVVGAARAGAVGDLRGVRVGVVRQLHGGEGYQPGVLASFEAAVEQLTALGAEVSEVDCPHFDHALAAYYLILPSEVSSNLARFDAMRYGLRVGDDGTRSAEEVMAMTRAAGFGPEVKRRIMIGTYALSAGYYDAYYNQAQKVRTLIARDLDAAYRSVDVLVSPTTPTTAFRLGEKVDDPLAMYLFDLCTLPLNLAGHCGMSVPSGLSPDDGLPVGLQIMAPALADDRLYRVGAAYEAARGPLLSAI.

Residues Lys81 and Ser156 each act as charge relay system in the active site. The active-site Acyl-ester intermediate is Ser180.

This sequence belongs to the amidase family. GatA subfamily. As to quaternary structure, heterotrimer of A, B and C subunits.

The enzyme catalyses L-glutamyl-tRNA(Gln) + L-glutamine + ATP + H2O = L-glutaminyl-tRNA(Gln) + L-glutamate + ADP + phosphate + H(+). Its function is as follows. Allows the formation of correctly charged Gln-tRNA(Gln) through the transamidation of misacylated Glu-tRNA(Gln) in organisms which lack glutaminyl-tRNA synthetase. The reaction takes place in the presence of glutamine and ATP through an activated gamma-phospho-Glu-tRNA(Gln). The polypeptide is Glutamyl-tRNA(Gln) amidotransferase subunit A (Mycobacterium bovis (strain ATCC BAA-935 / AF2122/97)).